Consider the following 297-residue polypeptide: NAD(P)-dependent methylenetetrahydromethanopterin dehydrogenase (297 aa).

It to M.extorquens MtdA. In terms of assembly, homohexamer.

The protein resides in the cytoplasm. It catalyses the reaction 5,10-methylenetetrahydromethanopterin + NAD(+) = 5,10-methenyl-5,6,7,8-tetrahydromethanopterin + NADH. The enzyme catalyses 5,10-methylenetetrahydromethanopterin + NADP(+) = 5,10-methenyl-5,6,7,8-tetrahydromethanopterin + NADPH. Its pathway is one-carbon metabolism; formaldehyde degradation; formate from formaldehyde (H(4)MPT route): step 2/5. Its function is as follows. Catalyzes the dehydrogenation of methylene-H(4)MPT. This is NAD(P)-dependent methylenetetrahydromethanopterin dehydrogenase (mtdB) from Methylorubrum extorquens (strain ATCC 14718 / DSM 1338 / JCM 2805 / NCIMB 9133 / AM1) (Methylobacterium extorquens).